Here is a 95-residue protein sequence, read N- to C-terminus: Sec-independent protein translocase protein TatA (95 aa).

The helical transmembrane segment at 1 to 21 threads the bilayer; the sequence is MGSMSVWHWVIVAVVVMLLFG. The tract at residues 42–95 is disordered; sequence GMADDETQPNTATSVPPVGPNDPVRTLPHQGAPGTAPQPPHVQPHVPAGDHKAV.

It belongs to the TatA/E family. In terms of assembly, the Tat system comprises two distinct complexes: a TatABC complex, containing multiple copies of TatA, TatB and TatC subunits, and a separate TatA complex, containing only TatA subunits. Substrates initially bind to the TatABC complex, which probably triggers association of the separate TatA complex to form the active translocon.

It is found in the cell inner membrane. Functionally, part of the twin-arginine translocation (Tat) system that transports large folded proteins containing a characteristic twin-arginine motif in their signal peptide across membranes. TatA could form the protein-conducting channel of the Tat system. The chain is Sec-independent protein translocase protein TatA from Methylorubrum extorquens (strain PA1) (Methylobacterium extorquens).